The sequence spans 1479 residues: C-type mannose receptor 2 (1479 aa).

An N-terminal signal peptide occupies residues 1 to 30 (MGPGRPAPAPWPRHLLRCVLLLGCLHLGRP). Over 31-1414 (GAPGDAALPE…PSALPENPAA (1384 aa)) the chain is Extracellular. The Ricin B-type lectin domain maps to 41 to 167 (PNVFLIFSHG…WRIYGSEEDL (127 aa)). An intrachain disulfide couples cysteine 54 to cysteine 68. Asparagine 69 carries N-linked (GlcNAc...) (complex) asparagine glycosylation. Cysteine 93 and cysteine 112 are disulfide-bonded. Asparagine 140 carries N-linked (GlcNAc...) asparagine glycosylation. In terms of domain architecture, Fibronectin type-II spans 182–230 (SHGKPCTIPFKYDNQWFHGCTSTGREDGHLWCATTQDYGKDERWGFCPI). Cystine bridges form between cysteine 187–cysteine 213, cysteine 201–cysteine 228, cysteine 266–cysteine 359, and cysteine 335–cysteine 351. The C-type lectin 1 domain maps to 244-360 (LTDSCYQFNF…CSIALPYVCK (117 aa)). N-linked (GlcNAc...) asparagine glycosylation occurs at asparagine 364. 4 C-type lectin domains span residues 389–505 (FQGH…SICK), 528–644 (HSPS…RYIC), 678–809 (KLRY…WICK), and 832–951 (FQEA…YICK). 2 disulfide bridges follow: cysteine 410–cysteine 504 and cysteine 481–cysteine 496. Asparagine 588 carries N-linked (GlcNAc...) asparagine glycosylation. 5 disulfide bridges follow: cysteine 618/cysteine 635, cysteine 704/cysteine 808, cysteine 785/cysteine 800, cysteine 853/cysteine 950, and cysteine 927/cysteine 942. N-linked (GlcNAc...) asparagine glycosylation is found at asparagine 954 and asparagine 1029. 3 C-type lectin domains span residues 979–1107 (FLNK…GFIC), 1132–1243 (YLNG…GAVC), and 1273–1393 (FREH…GVVC). Cysteine 1078 and cysteine 1098 are joined by a disulfide. Lysine 1142 is covalently cross-linked (Glycyl lysine isopeptide (Lys-Gly) (interchain with G-Cter in SUMO1)). Cysteine 1220 and cysteine 1234 are disulfide-bonded. Asparagine 1350 is a glycosylation site (N-linked (GlcNAc...) asparagine). An intrachain disulfide couples cysteine 1369 to cysteine 1384. Residues 1415–1435 (LVVVLMAVLLLLALLTAALIL) traverse the membrane as a helical segment. Over 1436–1479 (YRRRQSIERGAFEGARYSRSSSSPTEATEKNILVSDMEMNEQQE) the chain is Cytoplasmic. The disordered stretch occupies residues 1450–1479 (ARYSRSSSSPTEATEKNILVSDMEMNEQQE).

Interacts with C-terminal region of type I collagen/COL1A1. Interacts directly with PLAUR/UPAR and PLAU/pro-UPA to form a tri-molecular complex. Interacts with collagen V. In terms of processing, N-glycosylated. As to expression, ubiquitous with low expression in brain, placenta, lung, kidney, pancreas, spleen, thymus and colon. Expressed in endothelial cells, fibroblasts and macrophages. Highly expressed in fetal lung and kidney.

The protein localises to the membrane. In terms of biological role, may play a role as endocytotic lectin receptor displaying calcium-dependent lectin activity. Internalizes glycosylated ligands from the extracellular space for release in an endosomal compartment via clathrin-mediated endocytosis. May be involved in plasminogen activation system controlling the extracellular level of PLAUR/PLAU, and thus may regulate protease activity at the cell surface. May contribute to cellular uptake, remodeling and degradation of extracellular collagen matrices. May play a role during cancer progression as well as in other chronic tissue destructive diseases acting on collagen turnover. May participate in remodeling of extracellular matrix cooperating with the matrix metalloproteinases (MMPs). The polypeptide is C-type mannose receptor 2 (MRC2) (Homo sapiens (Human)).